Reading from the N-terminus, the 251-residue chain is Triosephosphate isomerase (251 aa).

Residue N9 to K11 coordinates substrate. The active-site Electrophile is H95. Residue E167 is the Proton acceptor of the active site. Substrate-binding positions include G173, S213, and G234–G235. Phosphoserine is present on S213.

The protein belongs to the triosephosphate isomerase family. Homodimer.

The protein localises to the cytoplasm. The enzyme catalyses D-glyceraldehyde 3-phosphate = dihydroxyacetone phosphate. Its pathway is carbohydrate biosynthesis; gluconeogenesis. The protein operates within carbohydrate degradation; glycolysis; D-glyceraldehyde 3-phosphate from glycerone phosphate: step 1/1. In terms of biological role, involved in the gluconeogenesis. Catalyzes stereospecifically the conversion of dihydroxyacetone phosphate (DHAP) to D-glyceraldehyde-3-phosphate (G3P). This is Triosephosphate isomerase from Bacillus anthracis.